The primary structure comprises 539 residues: Phosphoenolpyruvate carboxykinase (ATP) (539 aa).

The substrate site is built by Arg-64, Tyr-206, and Lys-212. ATP contacts are provided by residues Lys-212, His-231, and 247–255 (GLSGTGKTT). Mn(2+) is bound by residues Lys-212 and His-231. Asp-268 contributes to the Mn(2+) binding site. Residues Glu-296, Arg-332, 448 to 449 (RI), and Thr-454 each bind ATP. Arg-332 lines the substrate pocket.

The protein belongs to the phosphoenolpyruvate carboxykinase (ATP) family. Monomer. Mn(2+) serves as cofactor.

The protein localises to the cytoplasm. It catalyses the reaction oxaloacetate + ATP = phosphoenolpyruvate + ADP + CO2. It participates in carbohydrate biosynthesis; gluconeogenesis. In terms of biological role, involved in the gluconeogenesis. Catalyzes the conversion of oxaloacetate (OAA) to phosphoenolpyruvate (PEP) through direct phosphoryl transfer between the nucleoside triphosphate and OAA. This is Phosphoenolpyruvate carboxykinase (ATP) from Yersinia pestis bv. Antiqua (strain Antiqua).